An 871-amino-acid chain; its full sequence is CRISPR system Cmr subunit Cmr2 (871 aa).

The interval 1-215 is not required for target RNA cleavage; sequence MVNIKEKLFV…THLDLTSALS (215 aa). Positions 13, 14, and 25 each coordinate Mn(2+). Cys-448, Cys-451, Cys-478, and Cys-481 together coordinate Zn(2+). The GGDEF domain maps to 592 to 752; the sequence is KYYAILVMDG…GKDTLAIGLL (161 aa). Mn(2+)-binding residues include Asp-600, Glu-656, Asp-673, Asp-674, Glu-694, and Glu-700.

Belongs to the CRISPR system Cmr2 family. As to quaternary structure, part of the type III-B Cmr ribonucleoprotein (RNP) complex, an elongated RNP with Cmr2 and Cmr3 as the base, with Cmr4 and Cmr5 forming a helical core along the mature crRNA (39 or 45 nt in length), while the complex is capped by Cmr6 and Cmr1. The 5' end of the crRNA is bound to Cmr2 and Cmr3, while Cmr6 and a Cmr1 subunit (Cmr1-1 or Cmr1-2) cap the 3' end of the crRNA. The target RNA lies antiparallel to the crRNA, with its 5' end near Cmr1 and Cmr6 and its 3' end near Cmr2 and Cmr3; major target cleavage occurs nears the junction of Cmr1/Cmr6 and Cmr4/Cmr, with minor cleavage occurring at 6 nt intervals which coincide with the proposed spacing of Cmr4 subunits. Forms a 1:1 complex with Cmr3. The Cmr2-Cmr3 complex non-specifically binds ss-target RNA and crRNA. Interacts with Cmr3, Cmr4 and Cmr5. Ca(2+) serves as cofactor. It depends on Mn(2+) as a cofactor. Requires Zn(2+) as cofactor.

It localises to the cytoplasm. Functionally, CRISPR (clustered regularly interspaced short palindromic repeat), is an adaptive immune system that provides protection against mobile genetic elements (viruses, transposable elements and conjugative plasmids). CRISPR clusters contain sequences complementary to antecedent mobile elements and target invading nucleic acids. CRISPR clusters are transcribed and processed into CRISPR RNA (crRNA), formerly called psiRNA (prokaryotic silencing) in this organism. Part of the Cmr ribonucleoprotein complex which has divalent cation-dependent endoribonuclease activity specific for ssRNA complementary to the crRNA (target RNA), generating 5' hydroxy- and 3' phosphate or 2'-3' cyclic phosphate termini. Cmr4 is probably the subunit that cleaves target RNA. Cmr complex does not cleave ssDNA complementary to the crRNA. Cleavage of target RNA is guided by the crRNA; substrate cleavage occurs a fixed distance (14 nt) from the 3' end of the crRNA. In vitro reconstitution shows Cmr1-2 and Cmr5 are not absolutely necessary for target cleavage. This is CRISPR system Cmr subunit Cmr2 from Pyrococcus furiosus (strain ATCC 43587 / DSM 3638 / JCM 8422 / Vc1).